Consider the following 533-residue polypeptide: MATQQAKILCCGDVNGNFVELIKKISTTEKKNGPFDSLFCVGEFFGDDDDSNEKVINGNIEFPIPTYILGPANPRYSYLYPEESIEFSSNLTYLGKKGLLNTASGLQIAYLSGVEGSSKDLSCFDKADVEELLIPLGTQVGFSGTDILLTSVWPADIARHSHNQPSKPQPGSVLLSKLAAHLKPRYHFAGLGVHYERQPYRNHRVLLEPARHTTRFIGLAAIGNPEKQKWLYACNVKPMRKMEKEELTAQPPNASEFPYRELLEEIAAKETLSRMNGNGQRPEGSQYRFEMGGAEDGAGNGRKRHNDGGNDGPRNKQPVGPCWFCLSNVDAEKHLVVAIGNKCYAAMPKGPLTEDHVMVLSVGHIQSQVSAPVEVRDEIEKFKSAFTLMANKQGKALVTFERNFRTQHLQVQMVMIDKSSSKALKSSFTTAAACAGFELVTMGPDESLLDMVNEGCPYFVAELPDGSKLFTRSMKGFPLHFGREVLASTPILDCEDKVDWKACVLAKEKEVELVNKLKSDFKPFDFTAEDDSD.

The tract at residues 290–314 is disordered; that stretch reads EMGGAEDGAGNGRKRHNDGGNDGPR.

This sequence belongs to the CWF19 family.

The sequence is that of CWF19-like protein 1 homolog from Caenorhabditis elegans.